Here is a 283-residue protein sequence, read N- to C-terminus: Phosphatidylglycerol--prolipoprotein diacylglyceryl transferase (283 aa).

A run of 7 helical transmembrane segments spans residues 21–41 (LAIR…LWLA), 60–80 (LLFA…VLFY), 95–115 (VWTG…AMLW), 124–144 (FFTI…AGRL), 176–196 (SQLY…NWFI), 203–223 (GAVS…VEYV), and 239–259 (MGQI…VWAF). Arg-143 lines the a 1,2-diacyl-sn-glycero-3-phospho-(1'-sn-glycerol) pocket.

It belongs to the Lgt family.

It is found in the cell inner membrane. It carries out the reaction L-cysteinyl-[prolipoprotein] + a 1,2-diacyl-sn-glycero-3-phospho-(1'-sn-glycerol) = an S-1,2-diacyl-sn-glyceryl-L-cysteinyl-[prolipoprotein] + sn-glycerol 1-phosphate + H(+). The protein operates within protein modification; lipoprotein biosynthesis (diacylglyceryl transfer). Catalyzes the transfer of the diacylglyceryl group from phosphatidylglycerol to the sulfhydryl group of the N-terminal cysteine of a prolipoprotein, the first step in the formation of mature lipoproteins. The polypeptide is Phosphatidylglycerol--prolipoprotein diacylglyceryl transferase (Aliivibrio salmonicida (strain LFI1238) (Vibrio salmonicida (strain LFI1238))).